We begin with the raw amino-acid sequence, 607 residues long: Elongation factor 4 (607 aa).

A tr-type G domain is found at 11–193; sequence SKIRNFSIIA…QIVEKVPAPA (183 aa). Residues 23 to 28 and 140 to 143 each bind GTP; these read DHGKST and NKID.

Belongs to the TRAFAC class translation factor GTPase superfamily. Classic translation factor GTPase family. LepA subfamily.

The protein resides in the cell membrane. It carries out the reaction GTP + H2O = GDP + phosphate + H(+). Functionally, required for accurate and efficient protein synthesis under certain stress conditions. May act as a fidelity factor of the translation reaction, by catalyzing a one-codon backward translocation of tRNAs on improperly translocated ribosomes. Back-translocation proceeds from a post-translocation (POST) complex to a pre-translocation (PRE) complex, thus giving elongation factor G a second chance to translocate the tRNAs correctly. Binds to ribosomes in a GTP-dependent manner. The protein is Elongation factor 4 of Bacillus cereus (strain B4264).